A 169-amino-acid chain; its full sequence is Protein ORFb in retron Ec67 (169 aa).

The sequence is that of Protein ORFb in retron Ec67 from Escherichia coli.